Reading from the N-terminus, the 63-residue chain is Bowman-Birk type proteinase inhibitor B-II (63 aa).

Cystine bridges form between cysteine 5–cysteine 62, cysteine 6–cysteine 23, cysteine 9–cysteine 57, cysteine 11–cysteine 21, cysteine 30–cysteine 37, cysteine 34–cysteine 49, and cysteine 39–cysteine 47.

Belongs to the Bowman-Birk serine protease inhibitor family.

This Arachis hypogaea (Peanut) protein is Bowman-Birk type proteinase inhibitor B-II.